A 532-amino-acid chain; its full sequence is Developmental and secondary metabolism regulator ve1 (532 aa).

The region spanning 26–220 (NRSLWYQLTV…ADQGCRVRIR (195 aa)) is the Velvet domain. Positions 40–45 (ERARAC) match the Nuclear localization signal motif. The segment covering 217–229 (VRIRRDVRMRKRD) has biased composition (basic residues). Disordered regions lie at residues 217 to 440 (VRIR…TEPS) and 458 to 520 (PQVD…RADG). A compositionally biased stretch (low complexity) spans 233–250 (GGNNNNNNNAGNNAGNNG). 2 stretches are compositionally biased toward basic and acidic residues: residues 251-260 (FERREEDFGR) and 283-294 (SEHRASYSDVSR). Over residues 302-317 (YPPPPPPPPSYDPTPS) the composition is skewed to pro residues. Residues 397-411 (STSTYVPPSPSVYST) show a composition bias toward low complexity. Residues 435-463 (MNTEPSRGSIKISALVEPMPVIEPQVDPL) are PEST. The span at 481-493 (FAQNTRPLFNGQR) shows a compositional bias: polar residues.

Belongs to the velvet family. VeA subfamily. Component of the heterotrimeric velvet complex composed of laeA, ve1 and velB; Ve1 acting as a bridging protein between laeA and velB. Interacts directly with laeA and velB.

It localises to the nucleus. Its subcellular location is the cytoplasm. Its function is as follows. Component of the velvet transcription factor complex that controls sexual/asexual developmental ratio in response to light, promoting sexual development in the darkness while stimulating asexual sporulation under illumination. The velvet complex hat acts as a global regulator for secondary metabolite gene expression. Controls the expression of the aurofusarin and trichothecene gene clusters. Also controls the expression of the deoxynivalenol (DON) gene cluster. Regulates hyphal growth and pigment formation. Acts as a positive regulator of virulence. The protein is Developmental and secondary metabolism regulator ve1 of Gibberella zeae (strain ATCC MYA-4620 / CBS 123657 / FGSC 9075 / NRRL 31084 / PH-1) (Wheat head blight fungus).